The following is a 231-amino-acid chain: 2,3-bisphosphoglycerate-dependent phosphoglycerate mutase (231 aa).

Residues 8 to 15, 21 to 22, Arg-60, 87 to 90, Lys-98, 114 to 115, and 183 to 184 each bind substrate; these read RHGESEWN, TG, ERHY, RR, and GN. His-9 (tele-phosphohistidine intermediate) is an active-site residue. The active-site Proton donor/acceptor is Glu-87.

The protein belongs to the phosphoglycerate mutase family. BPG-dependent PGAM subfamily.

The enzyme catalyses (2R)-2-phosphoglycerate = (2R)-3-phosphoglycerate. The protein operates within carbohydrate degradation; glycolysis; pyruvate from D-glyceraldehyde 3-phosphate: step 3/5. Its function is as follows. Catalyzes the interconversion of 2-phosphoglycerate and 3-phosphoglycerate. In Streptococcus equi subsp. zooepidemicus (strain H70), this protein is 2,3-bisphosphoglycerate-dependent phosphoglycerate mutase.